Reading from the N-terminus, the 472-residue chain is Serine/threonine-protein kinase sax-1 (472 aa).

The Protein kinase domain occupies 87–381; it reads FESLKVIGRG…LDEIKQCPFF (295 aa). Residues 93-101 and lysine 116 each bind ATP; that span reads IGRGAFGEV. Aspartate 210 functions as the Proton acceptor in the catalytic mechanism. The AGC-kinase C-terminal domain occupies 382–452; it reads RRIDWNHIRE…KRFDGLTQKM (71 aa).

It belongs to the protein kinase superfamily. AGC Ser/Thr protein kinase family. Mg(2+) is required as a cofactor.

The protein localises to the cytoplasm. The protein resides in the nucleus. The enzyme catalyses L-seryl-[protein] + ATP = O-phospho-L-seryl-[protein] + ADP + H(+). It carries out the reaction L-threonyl-[protein] + ATP = O-phospho-L-threonyl-[protein] + ADP + H(+). Acts with sax-2 to restrict the growth of both primary and secondary neurites. Regulates mechanosensory tiling by controlling the termination point of sensory dendrites. This chain is Serine/threonine-protein kinase sax-1, found in Caenorhabditis briggsae.